We begin with the raw amino-acid sequence, 92 residues long: Small archaeal modifier protein 3 (92 aa).

Glycyl lysine isopeptide (Lys-Gly) (interchain with G-Cter in SAMP3) cross-links involve residues Lys-18, Lys-55, and Lys-62. Gly-92 bears the Glycyl adenylate; alternate mark. Residue Gly-92 forms a Glycyl lysine isopeptide (Gly-Lys) (interchain with K-? in acceptor proteins); alternate linkage.

In terms of assembly, monomer. In terms of processing, the C-terminal glycine is likely acyl-adenylated (-COAMP) by UbaA.

Functionally, functions as a protein modifier covalently attached to lysine residues of substrate proteins. The protein modification process is termed sampylation and involves the formation of an isopeptide bond between the SAMP3 C-terminal glycine carboxylate and the epsilon-amino group of lysine residues on target proteins. Seems to be able to form polymeric chains with itself at Lys-18, Lys-55 and Lys-62, similar to ubiquitin and other ubiquitin-like proteins. SAMP3 appears not to serve as a proteolytic signal in the cell to target proteins for degradation by proteasomes. May regulate molybdenum cofactor (MoCo) biosynthesis by inhibiting the activity of MPT synthase MoaE under aerobic conditions, providing a hierarchy of oxygen use prior to that of alternative electron acceptors such as DMSO. This is Small archaeal modifier protein 3 (samp3) from Haloferax volcanii (strain ATCC 29605 / DSM 3757 / JCM 8879 / NBRC 14742 / NCIMB 2012 / VKM B-1768 / DS2) (Halobacterium volcanii).